Reading from the N-terminus, the 190-residue chain is Large ribosomal subunit protein uL5 (190 aa).

It belongs to the universal ribosomal protein uL5 family. As to quaternary structure, part of the 50S ribosomal subunit; contacts the 5S rRNA and probably tRNA. Forms a bridge to the 30S subunit in the 70S ribosome.

This is one of the proteins that bind and probably mediate the attachment of the 5S RNA into the large ribosomal subunit, where it forms part of the central protuberance. In the 70S ribosome it contacts protein S13 of the 30S subunit (bridge B1b), connecting the 2 subunits; this bridge is implicated in subunit movement. May contact the P site tRNA; the 5S rRNA and some of its associated proteins might help stabilize positioning of ribosome-bound tRNAs. The protein is Large ribosomal subunit protein uL5 of Methanocaldococcus jannaschii (strain ATCC 43067 / DSM 2661 / JAL-1 / JCM 10045 / NBRC 100440) (Methanococcus jannaschii).